Reading from the N-terminus, the 981-residue chain is Amidohydrolase tasK (981 aa).

Residues 1 to 36 (MDDQKGPLPPYTPTATAPPPASMRQRRPPGRRRALR) are disordered. Residues 7-21 (PLPPYTPTATAPPPA) show a composition bias toward pro residues. A compositionally biased stretch (basic residues) spans 24–36 (RQRRPPGRRRALR). The helical transmembrane segment at 40-57 (TVRVLALACLAFVVLAQW) threads the bilayer. The tract at residues 86–107 (LRVRPQDPAGPGRSKNDRYLDG) is disordered. Residues His-187 and His-189 each coordinate Fe(2+). Zn(2+) is bound by residues His-187 and His-189. Asn-407 carries an N-linked (GlcNAc...) asparagine glycan. Residues 819–838 (KKQQKQQQQQQQQQQQQHGT) form a disordered region. Over residues 823–835 (KQQQQQQQQQQQQ) the composition is skewed to low complexity. An N-linked (GlcNAc...) asparagine glycan is attached at Asn-891.

It belongs to the metallo-dependent hydrolases superfamily. Fe(2+) is required as a cofactor. Mn(2+) serves as cofactor. It depends on Zn(2+) as a cofactor.

It is found in the membrane. Functionally, amidohydrolase; part of the gene cluster that mediates the biosynthesis of the tetramic acids Sch210971 and Sch210972, potential anti-HIV fungal natural product that contain a decalin core. The PKS module of tasS together with the enoylreductase tasC catalyze the formation of the polyketide unit which is then conjugated to 4-hydroxyl-4-methyl glutamate (HMG) by the condensation domain of the tasS NRPS module. One unique structural feature of Sch210971 and Sch210972 is the tetramic acid motif proposed to be derived from the non-proteinogenic amino acid HMG, by a Dieckmann-type condensation catalyzed by the reductase domain of tasS. The aldolase tasA catalyzes the aldol condensation of 2 molecules of pyruvic acid to yield the intermediate 4-hydroxyl-4-methyl-2-oxoglutarate (HMOG), which can then be stereoselectively transaminated, may be by tasG, to form HMG. The Diels-Alderase tas3 then uses the Dieckmann product of tasS as substrate and catalyzes the Diels-Alder cycloaddition to form the decalin ring of Sch210971 and Sch210972. The sequence is that of Amidohydrolase tasK from Hapsidospora irregularis.